A 153-amino-acid polypeptide reads, in one-letter code: MMTGELILVGLIVIGLIGRSPIIATAACVLLAVKLLHLSRFLPSIERRGLELGLLFLTLSVLVPFASGKVQMKELIAAFNTWPGWLALIGGAVAAYMNAKGLDLLKLDPQMVVGLVIGSIFGIIFLRGIPVGPLMAAGITAILYKLFKLMSGG.

5 helical membrane passes run 6 to 26 (LILVGLIVIGLIGRSPIIATA), 50 to 70 (LELGLLFLTLSVLVPFASGKV), 75 to 95 (LIAAFNTWPGWLALIGGAVAA), 111 to 131 (MVVGLVIGSIFGIIFLRGIPV), and 132 to 152 (GPLMAAGITAILYKLFKLMSG).

The protein belongs to the UPF0756 family.

The protein resides in the cell membrane. This Paenibacillus sp. (strain JDR-2) protein is UPF0756 membrane protein Pjdr2_2290.